An 899-amino-acid chain; its full sequence is Gamma-aminobutyric acid type B receptor subunit 1 (899 aa).

Residues 1 to 19 (MFVRSSWLLLWGTIVWASA) form the signal peptide. The Extracellular segment spans residues 20–447 (EPVTLHIGGT…KKHAMTVSNE (428 aa)). Asn69, Asn266, Asn339, Asn353, and Asn371 each carry an N-linked (GlcNAc...) asparagine glycan. A helical transmembrane segment spans residues 448-468 (FYYPTILFAVLGIAACVFIYL). Topologically, residues 469–487 (FTQKHHERLIIFQSQPECN) are cytoplasmic. Residues 488-508 (NILLIGCSLCLFSLFLIGLPS) form a helical membrane-spanning segment. Residues 509–525 (DDISISESLFPLLCHAR) lie on the Extracellular side of the membrane. The chain crosses the membrane as a helical span at residues 526-546 (VTILLFGFTFAYGSMFAKVWI). The Cytoplasmic segment spans residues 547-616 (VHRMGATENQ…LNQPISSSKF (70 aa)). A helical transmembrane segment spans residues 617–637 (YVIVAALTAVDVFVCFVWVLI). The Extracellular portion of the chain corresponds to 638 to 674 (DPLHLTEQKFPLFTPADSEEDEMIMPVLQQCQSNQQE). A helical membrane pass occupies residues 675–695 (VWIGIIMGFKCLLLVFGTFLS). At 696 to 713 (YETRNLKLRFINDSRFVG) the chain is on the cytoplasmic side. Residues 714 to 734 (LAIYNVAVMTLVTAPVVTLLI) form a helical membrane-spanning segment. The Extracellular segment spans residues 735-741 (HGKVDAN). Residues 742-762 (FAFISLTVLICTYISVGLIYG) form a helical membrane-spanning segment. The Cytoplasmic segment spans residues 763-899 (PKIRHIIKVP…SSTSSDEILL (137 aa)). Residues 791 to 842 (KVDQKRYDMLKKENETLQIQIEEKERKIHECKERLEELTKNSETEDMNAQLL) adopt a coiled-coil conformation. The tract at residues 870–899 (DLQNGNHPGQIYENDNDDDGSSTSSDEILL) is disordered. A compositionally biased stretch (low complexity) spans 890 to 899 (SSTSSDEILL).

It belongs to the G-protein coupled receptor 3 family. In terms of assembly, may form a heterodimer with gbb-2. In terms of tissue distribution, expressed in the nervous system, including cholinergic motor neurons, but not in GABAergic motor neurons or muscle.

It localises to the cell membrane. In terms of biological role, component of a heterodimeric G-protein coupled receptor for GABA, formed by gbb-1 and gbb-2. Within the heterodimeric GABA receptor, only gbb-1 seems to bind agonists, while gbb-2 mediates coupling to G proteins. Ligand binding causes a conformation change that triggers signaling via guanine nucleotide-binding proteins (G proteins) and modulates the activity of down-stream effectors, such as adenylate cyclase. Signaling inhibits adenylate cyclase, stimulates phospholipase A2, activates potassium channels, inactivates voltage-dependent calcium-channels and modulates inositol phospholipid hydrolysis. Calcium is required for high affinity binding to GABA. Plays a critical role in the fine-tuning of inhibitory synaptic transmission. Pre-synaptic GABA receptor inhibits neurotransmitter release by down-regulating high-voltage activated calcium channels, whereas postsynaptic GABA receptor decreases neuronal excitability by activating a prominent inwardly rectifying potassium (Kir) conductance that underlies the late inhibitory postsynaptic potentials. Along with gbb-2, may couple to the G(o)-alpha G-protein goa-1 to negatively regulate cholinergic receptor activity in the presence of high levels of acetylcholine in ventral cord motor neurons. As acetylcholine depolarizes body wall muscles, modulation of acetylcholine levels most likely results in the control of locomotory behavior. Acts in neurons to regulate lifespan, and this may be through G-protein-egl-8/PLC-beta signaling to the transcription factor daf-16/FOXO. This Caenorhabditis elegans protein is Gamma-aminobutyric acid type B receptor subunit 1.